The primary structure comprises 563 residues: Dihydroxy-acid dehydratase (563 aa).

Aspartate 78 contacts Mg(2+). Cysteine 119 contacts [2Fe-2S] cluster. Residues aspartate 120 and lysine 121 each coordinate Mg(2+). At lysine 121 the chain carries N6-carboxylysine. Residue cysteine 191 participates in [2Fe-2S] cluster binding. Residue glutamate 442 coordinates Mg(2+). Serine 468 functions as the Proton acceptor in the catalytic mechanism.

The protein belongs to the IlvD/Edd family. In terms of assembly, homodimer. It depends on [2Fe-2S] cluster as a cofactor. The cofactor is Mg(2+).

It catalyses the reaction (2R)-2,3-dihydroxy-3-methylbutanoate = 3-methyl-2-oxobutanoate + H2O. The enzyme catalyses (2R,3R)-2,3-dihydroxy-3-methylpentanoate = (S)-3-methyl-2-oxopentanoate + H2O. Its pathway is amino-acid biosynthesis; L-isoleucine biosynthesis; L-isoleucine from 2-oxobutanoate: step 3/4. The protein operates within amino-acid biosynthesis; L-valine biosynthesis; L-valine from pyruvate: step 3/4. Functions in the biosynthesis of branched-chain amino acids. Catalyzes the dehydration of (2R,3R)-2,3-dihydroxy-3-methylpentanoate (2,3-dihydroxy-3-methylvalerate) into 2-oxo-3-methylpentanoate (2-oxo-3-methylvalerate) and of (2R)-2,3-dihydroxy-3-methylbutanoate (2,3-dihydroxyisovalerate) into 2-oxo-3-methylbutanoate (2-oxoisovalerate), the penultimate precursor to L-isoleucine and L-valine, respectively. The sequence is that of Dihydroxy-acid dehydratase from Desulfitobacterium hafniense (strain DSM 10664 / DCB-2).